We begin with the raw amino-acid sequence, 84 residues long: Cell division topological specificity factor (84 aa).

The protein belongs to the MinE family.

Functionally, prevents the cell division inhibition by proteins MinC and MinD at internal division sites while permitting inhibition at polar sites. This ensures cell division at the proper site by restricting the formation of a division septum at the midpoint of the long axis of the cell. The chain is Cell division topological specificity factor from Cupriavidus metallidurans (strain ATCC 43123 / DSM 2839 / NBRC 102507 / CH34) (Ralstonia metallidurans).